A 255-amino-acid chain; its full sequence is MKRESNIQVLSRGQKDQPVSQIYQVSTMTSLLDGVYDGDFELSEIPKYGDFGIGTFNKLDGELIGFDGEFYRLRSDGTATPVQNGDRSPFCSFTFFTPDMTHKIDAKMTREDFEKEINSMLPSRNLFYAIRIDGLFKKVQTRTVELQEKPYVPMVEAVKTQPIFNFDNVRGTIVGFLTPAYANGIAVSGYHLHFIDEGRNSGGHVFDYVLEDCTVTISQKMNMNLRLPNTADFFNANLDNPDFAKDIETTEGSPE.

This sequence belongs to the alpha-acetolactate decarboxylase family.

It catalyses the reaction (2S)-2-acetolactate + H(+) = (R)-acetoin + CO2. It functions in the pathway polyol metabolism; (R,R)-butane-2,3-diol biosynthesis; (R,R)-butane-2,3-diol from pyruvate: step 2/3. Converts acetolactate into acetoin, which can be excreted by the cells. This may be a mechanism for controlling the internal pH of cells in the stationary stage. This is Alpha-acetolactate decarboxylase (alsD) from Bacillus subtilis (strain 168).